Reading from the N-terminus, the 288-residue chain is MALFRKKDKYIRINPNRSRIESAPQAKPEVPDELFSKCPACKVILYKNDLGLEKTCQHCSYNFRITAQERRALTVDEGSFEELFTGIETTNPLDFPNYLEKLAATRQKTGLDEAVLTGKATIGGQPVALGIMDSHFIMASMGTVVGEKITRLFELAIEERLPVVLFTASGGARMQEGIMSLMQMAKISAAVKRHSNAGLFYLTVLTDPTTGGVTASFAMEGDIILAEPQTLVGFAGRRVIESTVRENLPDDFQKAEFLQEHGFVDAIVKRQDLPATISRLLRMHGGVR.

The CoA carboxyltransferase N-terminal domain occupies 34 to 288; it reads LFSKCPACKV…RLLRMHGGVR (255 aa). Zn(2+) is bound by residues C38, C41, C56, and C59. Residues 38–59 form a C4-type zinc finger; that stretch reads CPACKVILYKNDLGLEKTCQHC.

Belongs to the AccD/PCCB family. As to quaternary structure, acetyl-CoA carboxylase is a heterohexamer composed of biotin carboxyl carrier protein (AccB), biotin carboxylase (AccC) and two subunits each of ACCase subunit alpha (AccA) and ACCase subunit beta (AccD). The cofactor is Zn(2+).

It localises to the cytoplasm. The enzyme catalyses N(6)-carboxybiotinyl-L-lysyl-[protein] + acetyl-CoA = N(6)-biotinyl-L-lysyl-[protein] + malonyl-CoA. Its pathway is lipid metabolism; malonyl-CoA biosynthesis; malonyl-CoA from acetyl-CoA: step 1/1. Its function is as follows. Component of the acetyl coenzyme A carboxylase (ACC) complex. Biotin carboxylase (BC) catalyzes the carboxylation of biotin on its carrier protein (BCCP) and then the CO(2) group is transferred by the transcarboxylase to acetyl-CoA to form malonyl-CoA. This Streptococcus suis (strain 98HAH33) protein is Acetyl-coenzyme A carboxylase carboxyl transferase subunit beta.